A 338-amino-acid polypeptide reads, in one-letter code: Nucleoid-associated protein PM1885 (338 aa).

It belongs to the YejK family.

Its subcellular location is the cytoplasm. It is found in the nucleoid. The protein is Nucleoid-associated protein PM1885 of Pasteurella multocida (strain Pm70).